A 1071-amino-acid polypeptide reads, in one-letter code: DNA-directed RNA polymerase subunit beta (1071 aa).

The protein belongs to the RNA polymerase beta chain family. In plastids the minimal PEP RNA polymerase catalytic core is composed of four subunits: alpha, beta, beta', and beta''. When a (nuclear-encoded) sigma factor is associated with the core the holoenzyme is formed, which can initiate transcription.

Its subcellular location is the plastid. The protein resides in the chloroplast. The enzyme catalyses RNA(n) + a ribonucleoside 5'-triphosphate = RNA(n+1) + diphosphate. In terms of biological role, DNA-dependent RNA polymerase catalyzes the transcription of DNA into RNA using the four ribonucleoside triphosphates as substrates. This Panax ginseng (Korean ginseng) protein is DNA-directed RNA polymerase subunit beta.